A 452-amino-acid chain; its full sequence is Mitochondrial distribution and morphology protein 34 (452 aa).

Residues 1-196 form the SMP-LTD domain; sequence MSFRVKGWSD…LPSIIYKMSR (196 aa).

It belongs to the MDM34 family. As to quaternary structure, component of the ER-mitochondria encounter structure (ERMES) or MDM complex, composed of mmm1, mdm10, mdm12 and mdm34.

It localises to the mitochondrion outer membrane. Its function is as follows. Component of the ERMES/MDM complex, which serves as a molecular tether to connect the endoplasmic reticulum (ER) and mitochondria. Components of this complex are involved in the control of mitochondrial shape and protein biogenesis, and function in nonvesicular lipid trafficking between the ER and mitochondria. Mdm34 is required for the interaction of the ER-resident membrane protein mmm1 and the outer mitochondrial membrane-resident beta-barrel protein mdm10. In Schizosaccharomyces pombe (strain 972 / ATCC 24843) (Fission yeast), this protein is Mitochondrial distribution and morphology protein 34.